A 386-amino-acid polypeptide reads, in one-letter code: MAESNFVDYVKIYCRSGKGGRGSSHFRREKYIPKGGPDGGDGGRGGHVYLRGNRNYWTLLHLKYERHIMATNGESGSAKRSSGKDGEDRVIEVPCGTVVYDAETGEFICDVTEDGQQVMLLKGGRGGLGNFNFKTATNQAPRYSQPGEPALERTVILQLKLLADVGLVGFPNAGKSTLLSVVSAAKPKIANYPFTTLEPNLGIVSYRDNRSFVMADIPGIIEGASEGKGLGLRFLRHIERNSLLLFMVPAEADDIKKEYEILHNELVKYNPELLDKRRVLAITKSDMLDEELIEALSQDLPEGIPYVFISSITGLGIVELKDLLWKELNKENFHEAERIVHKNIDVSTLEFEDDDEYIFPVDEDEDDPDEEYEEYWDDDEDEDTRK.

Positions 4 to 162 (SNFVDYVKIY…RTVILQLKLL (159 aa)) constitute an Obg domain. A disordered region spans residues 18–44 (KGGRGSSHFRREKYIPKGGPDGGDGGR). Positions 163–329 (ADVGLVGFPN…LKDLLWKELN (167 aa)) constitute an OBG-type G domain. GTP is bound by residues 169-176 (GFPNAGKS), 194-198 (FTTLE), 216-219 (DIPG), 283-286 (TKSD), and 310-312 (SSI). The Mg(2+) site is built by serine 176 and threonine 196. The interval 357–386 (YIFPVDEDEDDPDEEYEEYWDDDEDEDTRK) is disordered.

This sequence belongs to the TRAFAC class OBG-HflX-like GTPase superfamily. OBG GTPase family. As to quaternary structure, monomer. Requires Mg(2+) as cofactor.

It localises to the cytoplasm. Its function is as follows. An essential GTPase which binds GTP, GDP and possibly (p)ppGpp with moderate affinity, with high nucleotide exchange rates and a fairly low GTP hydrolysis rate. Plays a role in control of the cell cycle, stress response, ribosome biogenesis and in those bacteria that undergo differentiation, in morphogenesis control. This Parabacteroides distasonis (strain ATCC 8503 / DSM 20701 / CIP 104284 / JCM 5825 / NCTC 11152) protein is GTPase Obg.